The primary structure comprises 48 residues: Light-harvesting protein B-870 beta chain (48 aa).

At 2–21 (AERKGSISGLTDDEAQEFHK) the chain is on the cytoplasmic side. A bacteriochlorophyll contacts are provided by histidine 20 and histidine 38. The helical transmembrane segment at 22–44 (FWVQGFVGFTAVAVVAHFLVWVW) threads the bilayer. Topologically, residues 45–48 (RPWL) are periplasmic.

In terms of assembly, an alpha/beta heterodimer. The core complex is formed by different alpha and beta chains, binding bacteriochlorophyll molecules, and arranged most probably in tetrameric structures disposed around the reaction center. The non-pigmented gamma chains may constitute additional components.

It is found in the cell inner membrane. In terms of biological role, antenna complexes are light-harvesting systems, which transfer the excitation energy to the reaction centers. In Rubrivivax gelatinosus (Rhodocyclus gelatinosus), this protein is Light-harvesting protein B-870 beta chain (pufB).